The following is a 218-amino-acid chain: Small ribosomal subunit protein uS3c (218 aa).

The KH type-2 domain maps to 39 to 120; it reads IRNFMNKELL…IITCKVVGVT (82 aa).

Belongs to the universal ribosomal protein uS3 family. Part of the 30S ribosomal subunit.

The protein resides in the plastid. It localises to the chloroplast. The protein is Small ribosomal subunit protein uS3c (rps3) of Euglena gracilis.